Here is a 270-residue protein sequence, read N- to C-terminus: Malonyl-[acyl-carrier protein] O-methyltransferase (270 aa).

Belongs to the methyltransferase superfamily.

The catalysed reaction is malonyl-[ACP] + S-adenosyl-L-methionine = malonyl-[ACP] methyl ester + S-adenosyl-L-homocysteine. It functions in the pathway cofactor biosynthesis; biotin biosynthesis. Its function is as follows. Converts the free carboxyl group of a malonyl-thioester to its methyl ester by transfer of a methyl group from S-adenosyl-L-methionine (SAM). It allows to synthesize pimeloyl-ACP via the fatty acid synthetic pathway. This chain is Malonyl-[acyl-carrier protein] O-methyltransferase, found in Magnetococcus marinus (strain ATCC BAA-1437 / JCM 17883 / MC-1).